The sequence spans 126 residues: Adrenocorticotropic hormone receptor (126 aa).

A helical membrane pass occupies residues 1 to 25 (VLPEEIFFTISIVGVLENLIVLLAV). The Cytoplasmic segment spans residues 26–34 (FKNKNLQAP). Residues 35-55 (MYFFICSLAISDMLGSLYKIL) form a helical membrane-spanning segment. The Extracellular portion of the chain corresponds to 56–80 (ENILIILRNMGYLKPRGSFETTADD). The chain crosses the membrane as a helical span at residues 81-102 (IIDSLFVLSLLGAIFSLSVIAA). At 103–123 (DRYITIFHALRYHSIVTMRRT) the chain is on the cytoplasmic side. A helical membrane pass occupies residues 124 to 126 (VVV).

The protein belongs to the G-protein coupled receptor 1 family. As to quaternary structure, interacts with MRAP; increasing ligand-sensitivity and generation of cAMP. Interacts with MRAP2; competing with MRAP for binding to MC2R and impairing the binding of corticotropin (ACTH).

Its subcellular location is the cell membrane. Receptor for corticotropin (ACTH). This receptor is mediated by G proteins (G(s)) which activate adenylate cyclase (cAMP). The chain is Adrenocorticotropic hormone receptor (MC2R) from Papio hamadryas (Hamadryas baboon).